A 299-amino-acid polypeptide reads, in one-letter code: MKFSTFVSLGLTAITALAAPTPSMIDVKRDVVKRAASLEDVATAERPLRCRPSASLPPPSRVTRLPLFSSLVLSRALATTSRSAATSPSSDRTARSCLRTSPSPSRVSRMLSFVTLPSRRSSVAMLSPSRRYELVTPKEITTYLHRLQSENVWVDHLDLSSDRDHDKDYYDGLLDITHAADFVTVTNTFLHDHWKASLIGHSDSNGAEDKGHLTVTYANNYLKNLNSRGRPSASAQATSTTTTTRTCRMVSTPARVRSCLFRTTFLSAPRRLFTRLMLDMLLSLATTSVMARTLPRRVL.

The first 18 residues, 1–18 (MKFSTFVSLGLTAITALA), serve as a signal peptide directing secretion. Composition is skewed to low complexity over residues 82-91 (RSAATSPSSD) and 232-246 (SASA…TTRT). Disordered stretches follow at residues 82-105 (RSAA…PSPS) and 227-246 (SRGR…TTRT).

The protein belongs to the polysaccharide lyase 1 family.

It localises to the secreted. The enzyme catalyses Eliminative cleavage of (1-&gt;4)-alpha-D-galacturonan methyl ester to give oligosaccharides with 4-deoxy-6-O-methyl-alpha-D-galact-4-enuronosyl groups at their non-reducing ends.. The protein is Pectin lyase (PELA) of Peyronellaea pinodes (Pea foot rot fungus).